We begin with the raw amino-acid sequence, 1379 residues long: DNA-directed RNA polymerase subunit beta (1379 aa).

Belongs to the RNA polymerase beta chain family. The RNAP catalytic core consists of 2 alpha, 1 beta, 1 beta' and 1 omega subunit. When a sigma factor is associated with the core the holoenzyme is formed, which can initiate transcription.

The catalysed reaction is RNA(n) + a ribonucleoside 5'-triphosphate = RNA(n+1) + diphosphate. Functionally, DNA-dependent RNA polymerase catalyzes the transcription of DNA into RNA using the four ribonucleoside triphosphates as substrates. This Allorhizobium ampelinum (strain ATCC BAA-846 / DSM 112012 / S4) (Agrobacterium vitis (strain S4)) protein is DNA-directed RNA polymerase subunit beta.